The following is a 494-amino-acid chain: Casein kinase I homolog HRR25 (494 aa).

The Protein kinase domain maps to Phe9–Ile278. ATP is bound by residues Ile15–Ile23 and Lys38. Asp128 acts as the Proton acceptor in catalysis. Ser143 is subject to Phosphoserine. The segment at Arg394–Leu494 is disordered. Low complexity-rich tracts occupy residues Gln395–Pro418 and Gln432–Gln444. Positions Val445 to Pro479 are enriched in polar residues.

This sequence belongs to the protein kinase superfamily. CK1 Ser/Thr protein kinase family. Casein kinase I subfamily. Interacts with HRI1. Interacts with ELP1/IKI3; the interaction leads to ELP1/IKI3 phosphorylation.

The protein resides in the cytoplasm. It localises to the nucleus. It is found in the nucleolus. The protein localises to the nucleoplasm. It carries out the reaction L-seryl-[protein] + ATP = O-phospho-L-seryl-[protein] + ADP + H(+). The enzyme catalyses L-threonyl-[protein] + ATP = O-phospho-L-threonyl-[protein] + ADP + H(+). Protein kinase which phosphorylates serine and threonine residues. Can use casein as a substrate. Phosphorylates elongator complex member ELP1/IKI3 on 'Ser-1198' and 'Ser-1202' which promotes the tRNA modification function of the complex. Associated with repair of damaged DNA and meiosis. This is Casein kinase I homolog HRR25 (HRR25) from Saccharomyces cerevisiae (strain ATCC 204508 / S288c) (Baker's yeast).